The sequence spans 357 residues: 2-oxoglutarate-dependent dioxygenase 11 (357 aa).

The Fe2OG dioxygenase domain occupies 207–307 (QPRGLRMAYY…RISAALFHYP (101 aa)). Positions 231, 233, and 288 each coordinate Fe cation. Residue Arg298 participates in 2-oxoglutarate binding.

It belongs to the iron/ascorbate-dependent oxidoreductase family. Fe(2+) is required as a cofactor. It depends on L-ascorbate as a cofactor. In terms of tissue distribution, expressed in shoots.

It is found in the cytoplasm. The enzyme catalyses melatonin + 2-oxoglutarate + O2 = 2-hydroxymelatonin + succinate + CO2. Involved in melatonin degradation. Catalyzes the hydroxylation of melatonin to produce 2-hydroxymelatonin. The sequence is that of 2-oxoglutarate-dependent dioxygenase 11 from Oryza sativa subsp. japonica (Rice).